The primary structure comprises 1066 residues: Hemoglobin and hemoglobin-haptoglobin-binding protein C (1066 aa).

Positions 1 to 24 (MTNFKFTLLARSIAFALNASTAYA) are cleaved as a signal peptide. Tandem repeats lie at residues 26–29 (QPTN), 30–33 (QPTN), 34–37 (QPTN), 38–41 (QPTN), 42–45 (QPTN), 46–49 (QPTN), and 50–53 (QPTN). Residues 26-53 (QPTNQPTNQPTNQPTNQPTNQPTNQPTN) form a 7 X 4 AA tandem repeats of Q-P-T-N region. Residues 26–54 (QPTNQPTNQPTNQPTNQPTNQPTNQPTNQ) are compositionally biased toward low complexity. Residues 26 to 57 (QPTNQPTNQPTNQPTNQPTNQPTNQPTNQDSN) form a disordered region. The short motif at 63–70 (EQINVSGS) is the TonB box element. Residues 66 to 200 (NVSGSTETIN…LGGSVIFETK (135 aa)) enclose the TBDR plug domain. Residues 208 to 1066 (DKDYYVSYKR…NYRMSVQFEF (859 aa)) enclose the TBDR beta-barrel domain. Positions 1049–1066 (NRLYAPGRNYRMSVQFEF) match the TonB C-terminal box motif.

It belongs to the TonB-dependent receptor family. Hemoglobin/haptoglobin binding protein subfamily.

It localises to the cell outer membrane. Its function is as follows. Acts as a receptor for hemoglobin or the hemoglobin/haptoglobin complex of the human host and is required for heme uptake. This is Hemoglobin and hemoglobin-haptoglobin-binding protein C (hgpC) from Haemophilus influenzae.